Consider the following 316-residue polypeptide: Probable cell division protein WhiA (316 aa).

Positions 275 to 309 form a DNA-binding region, H-T-H motif; the sequence is TLKELGEMVASGKISKSGINHRLRKLDEIAEQLRT.

Belongs to the WhiA family.

Its function is as follows. Involved in cell division and chromosome segregation. The polypeptide is Probable cell division protein WhiA (Bacillus velezensis (strain DSM 23117 / BGSC 10A6 / LMG 26770 / FZB42) (Bacillus amyloliquefaciens subsp. plantarum)).